Consider the following 616-residue polypeptide: Dihydroxy-acid dehydratase (616 aa).

D81 is a binding site for Mg(2+). C122 is a binding site for [2Fe-2S] cluster. Mg(2+) contacts are provided by D123 and K124. K124 is modified (N6-carboxylysine). [2Fe-2S] cluster is bound at residue C195. E491 contacts Mg(2+). The active-site Proton acceptor is S517.

It belongs to the IlvD/Edd family. As to quaternary structure, homodimer. The cofactor is [2Fe-2S] cluster. It depends on Mg(2+) as a cofactor.

It catalyses the reaction (2R)-2,3-dihydroxy-3-methylbutanoate = 3-methyl-2-oxobutanoate + H2O. The enzyme catalyses (2R,3R)-2,3-dihydroxy-3-methylpentanoate = (S)-3-methyl-2-oxopentanoate + H2O. It functions in the pathway amino-acid biosynthesis; L-isoleucine biosynthesis; L-isoleucine from 2-oxobutanoate: step 3/4. Its pathway is amino-acid biosynthesis; L-valine biosynthesis; L-valine from pyruvate: step 3/4. In terms of biological role, functions in the biosynthesis of branched-chain amino acids. Catalyzes the dehydration of (2R,3R)-2,3-dihydroxy-3-methylpentanoate (2,3-dihydroxy-3-methylvalerate) into 2-oxo-3-methylpentanoate (2-oxo-3-methylvalerate) and of (2R)-2,3-dihydroxy-3-methylbutanoate (2,3-dihydroxyisovalerate) into 2-oxo-3-methylbutanoate (2-oxoisovalerate), the penultimate precursor to L-isoleucine and L-valine, respectively. The chain is Dihydroxy-acid dehydratase from Escherichia coli (strain SMS-3-5 / SECEC).